The sequence spans 301 residues: Probable 5-dehydro-4-deoxyglucarate dehydratase (301 aa).

Belongs to the DapA family.

The catalysed reaction is 5-dehydro-4-deoxy-D-glucarate + H(+) = 2,5-dioxopentanoate + CO2 + H2O. The protein operates within carbohydrate acid metabolism; D-glucarate degradation; 2,5-dioxopentanoate from D-glucarate: step 2/2. This Cereibacter sphaeroides (strain ATCC 17023 / DSM 158 / JCM 6121 / CCUG 31486 / LMG 2827 / NBRC 12203 / NCIMB 8253 / ATH 2.4.1.) (Rhodobacter sphaeroides) protein is Probable 5-dehydro-4-deoxyglucarate dehydratase.